The chain runs to 281 residues: LC-AMP precursor 3 (281 aa).

Residues 1-19 (MKYTIIPFLLLVALTCATA) form the signal peptide. Positions 20 to 56 (RSIDGSEKEVQEIREETPSSNEDVPFSLSANEDEEAR) are excised as a propeptide. L74 is subject to Leucine amide. Positions 75-89 (GREESLSANEDEEAR) are excised as a propeptide. At S114 the chain carries Serine amide. The propeptide occupies 115-129 (GREESFSANEDEEER). L147 carries the post-translational modification Leucine amide. Residues 148-162 (GREESISANEDEETR) constitute a propeptide that is removed on maturation. L180 bears the Leucine amide mark. Residues 181-195 (GREESLSAIEDEEAR) constitute a propeptide that is removed on maturation. L213 carries the post-translational modification Leucine amide. A propeptide spanning residues 214–228 (GREESLSANEDEEAR) is cleaved from the precursor. L246 carries the leucine amide modification. Residues 247–261 (GREESLSANEDEEAR) constitute a propeptide that is removed on maturation. Residue L279 is modified to Leucine amide.

Expressed by the venom gland.

The protein resides in the secreted. Its function is as follows. Antimicrobial peptide that acts by influencing bacterial cell membrane permeability at low concentrations and by directly disrupting structure-function at high concentrations. Shows activity against Gram-negative bacteria (S.typhimurium CGMCC 1.1174 (MIC=2.5 uM), E.coli CCTCC AB 2018675 (MIC=5 uM), S.dysenteriae CGMCC 1.1869 (MIC=2.5 uM), P.aeruginosa CGMCC 1.596 (MIC 5-10 uM), K.pneumoniae (MIC=10 uM), A.baumannii (MIC=5-10 uM)), and Gram-positive bacteria (S.aureus CMCC 26003 or MRSA ATCC 43300 (MIC=5 uM), and E.faecium (MIC=2.5-5 uM)). Inhibits biofilm formation of E.coli and S.aureus in a dose-dependent manner and disrupts established biofilms. Demonstrates minimal bacterial resistance, excellent stability, negligible mammalian cell toxicity, low hemolytic activity, and appropriate selectivity for both normal and tumor cells. When combined with traditional antibiotics, exhibits additive or synergistic therapeutic effects. In vivo, in a neutropenic mouse thigh infection model, exhibits a therapeutic effect in inhibiting bacterial proliferation. This chain is LC-AMP precursor 3, found in Lycosa coelestis (Wolf spider).